The following is a 114-amino-acid chain: Cuticle protein CP1158 (114 aa).

The residue at position 1 (glutamine 1) is a Pyrrolidone carboxylic acid. 4 consecutive repeat copies span residues 1-17 (QVGYSGIVSPDGNNIQF), 26-43 (VLKGPSGIVTSDGKNLQL), 70-87 (SVVGPSGIVSPSGNVQFS), and 95-112 (VLVGPSGIVTKDGNNLQL).

In terms of tissue distribution, calcified shell.

The protein is Cuticle protein CP1158 of Cancer pagurus (Rock crab).